Here is a 504-residue protein sequence, read N- to C-terminus: Galactose/methyl galactoside import ATP-binding protein MglA (504 aa).

ABC transporter domains follow at residues 8 to 247 (LEMN…VGRD) and 258 to 504 (TPGE…TRFI). 40–47 (GENGAGKS) provides a ligand contact to ATP.

The protein belongs to the ABC transporter superfamily. Galactose/methyl galactoside importer (TC 3.A.1.2.3) family. In terms of assembly, the complex is composed of one ATP-binding protein (MglA), two transmembrane proteins (MglC) and a solute-binding protein (MglB).

It is found in the cell membrane. The catalysed reaction is D-galactose(out) + ATP + H2O = D-galactose(in) + ADP + phosphate + H(+). It catalyses the reaction methyl beta-D-galactoside(out) + ATP + H2O = methyl beta-D-galactoside(in) + ADP + phosphate + H(+). Functionally, part of the ABC transporter complex MglABC involved in galactose/methyl galactoside import. Responsible for energy coupling to the transport system. This is Galactose/methyl galactoside import ATP-binding protein MglA from Clostridium tetani (strain Massachusetts / E88).